The primary structure comprises 194 residues: Probable nicotinate-nucleotide adenylyltransferase (194 aa).

Belongs to the NadD family.

The enzyme catalyses nicotinate beta-D-ribonucleotide + ATP + H(+) = deamido-NAD(+) + diphosphate. The protein operates within cofactor biosynthesis; NAD(+) biosynthesis; deamido-NAD(+) from nicotinate D-ribonucleotide: step 1/1. Its function is as follows. Catalyzes the reversible adenylation of nicotinate mononucleotide (NaMN) to nicotinic acid adenine dinucleotide (NaAD). This is Probable nicotinate-nucleotide adenylyltransferase from Brucella suis biovar 1 (strain 1330).